The primary structure comprises 291 residues: ATP phosphoribosyltransferase (291 aa).

It belongs to the ATP phosphoribosyltransferase family. Long subfamily. Mg(2+) serves as cofactor.

It localises to the cytoplasm. The enzyme catalyses 1-(5-phospho-beta-D-ribosyl)-ATP + diphosphate = 5-phospho-alpha-D-ribose 1-diphosphate + ATP. It participates in amino-acid biosynthesis; L-histidine biosynthesis; L-histidine from 5-phospho-alpha-D-ribose 1-diphosphate: step 1/9. With respect to regulation, feedback inhibited by histidine. In terms of biological role, catalyzes the condensation of ATP and 5-phosphoribose 1-diphosphate to form N'-(5'-phosphoribosyl)-ATP (PR-ATP). Has a crucial role in the pathway because the rate of histidine biosynthesis seems to be controlled primarily by regulation of HisG enzymatic activity. This Geotalea daltonii (strain DSM 22248 / JCM 15807 / FRC-32) (Geobacter daltonii) protein is ATP phosphoribosyltransferase.